Here is a 449-residue protein sequence, read N- to C-terminus: Mannan endo-1,6-alpha-mannosidase DCW1 (449 aa).

Positions 1–21 (MLVNKVIGLLGVLFATRFTNA) are cleaved as a signal peptide. 12 N-linked (GlcNAc...) asparagine glycosylation sites follow: Asn34, Asn84, Asn109, Asn133, Asn203, Asn225, Asn240, Asn265, Asn281, Asn337, Asn362, and Asn420. Gly428 carries the GPI-anchor amidated glycine lipid modification. Residues 429–449 (AGIITAVIGISIVACALWLVF) constitute a propeptide, removed in mature form.

The protein belongs to the glycosyl hydrolase 76 family.

It localises to the cell membrane. It carries out the reaction Random hydrolysis of (1-&gt;6)-alpha-D-mannosidic linkages in unbranched (1-&gt;6)-mannans.. Its function is as follows. Required for normal synthesis of the cell wall. The sequence is that of Mannan endo-1,6-alpha-mannosidase DCW1 (DCW1) from Saccharomyces cerevisiae (strain ATCC 204508 / S288c) (Baker's yeast).